A 250-amino-acid chain; its full sequence is Mediator of RNA polymerase II transcription subunit 6 (250 aa).

Residues 166-250 (KKREEEKKED…EPTARTTSKQ (85 aa)) form a disordered region. A compositionally biased stretch (acidic residues) spans 204–223 (PAEDALEREEKEEVEEEEEE). A compositionally biased stretch (basic and acidic residues) spans 224–239 (TLKTEEPTTSTDEPKF).

It belongs to the Mediator complex subunit 6 family. In terms of assembly, component of the Mediator complex. Interacts with let-19/mdt-13. Interacts with RNA polymerase II. Interacts with mdt-28.

It localises to the nucleus. Component of the Mediator complex, a coactivator involved in the regulated transcription of nearly all RNA polymerase II-dependent genes. Mediator functions as a bridge to convey information from gene-specific regulatory proteins to the basal RNA polymerase II transcription machinery. Mediator is recruited to promoters by direct interactions with regulatory proteins and serves as a scaffold for the assembly of a functional preinitiation complex with RNA polymerase II and the general transcription factors. Acts to repress beta-catenin target genes. Required for asymmetric division of T-cells and for gonad and germ cell development. This Caenorhabditis elegans protein is Mediator of RNA polymerase II transcription subunit 6 (mdt-6).